The following is a 393-amino-acid chain: NAD(P)H-quinone oxidoreductase subunit H, chloroplastic (393 aa).

It belongs to the complex I 49 kDa subunit family. As to quaternary structure, NDH is composed of at least 16 different subunits, 5 of which are encoded in the nucleus.

It localises to the plastid. The protein resides in the chloroplast thylakoid membrane. It catalyses the reaction a plastoquinone + NADH + (n+1) H(+)(in) = a plastoquinol + NAD(+) + n H(+)(out). The enzyme catalyses a plastoquinone + NADPH + (n+1) H(+)(in) = a plastoquinol + NADP(+) + n H(+)(out). Its function is as follows. NDH shuttles electrons from NAD(P)H:plastoquinone, via FMN and iron-sulfur (Fe-S) centers, to quinones in the photosynthetic chain and possibly in a chloroplast respiratory chain. The immediate electron acceptor for the enzyme in this species is believed to be plastoquinone. Couples the redox reaction to proton translocation, and thus conserves the redox energy in a proton gradient. This Solanum tuberosum (Potato) protein is NAD(P)H-quinone oxidoreductase subunit H, chloroplastic.